A 387-amino-acid polypeptide reads, in one-letter code: Cell surface GPI-anchored protein ARB_01627 (387 aa).

The N-terminal stretch at 1-19 is a signal peptide; that stretch reads MAITKYLVSALAVAGLAFA. N-linked (GlcNAc...) asparagine glycosylation is found at asparagine 73, asparagine 175, asparagine 201, asparagine 206, asparagine 231, asparagine 236, asparagine 253, and asparagine 270. Residues 338 to 361 show a composition bias toward basic and acidic residues; sequence TCRERQEKPKTGDDHSGGDEEGHK. The disordered stretch occupies residues 338 to 362; that stretch reads TCRERQEKPKTGDDHSGGDEEGHKG. Alanine 364 carries the GPI-anchor amidated alanine lipid modification. Residues 365–387 constitute a propeptide, removed in mature form; sequence AAFAKAPAAALLIAFVGALQFFL.

Belongs to the SPS2 family. The GPI-anchor is attached to the protein in the endoplasmic reticulum and serves to target the protein to the cell surface. There, the glucosamine-inositol phospholipid moiety is cleaved off and the GPI-modified mannoprotein is covalently attached via its lipidless GPI glycan remnant to the 1,6-beta-glucan of the outer cell wall layer.

Its subcellular location is the cell membrane. The protein resides in the secreted. The protein localises to the cell wall. Required for proper cell wall integrity and for the correct assembly of the mannoprotein outer layer of the cell wall. The polypeptide is Cell surface GPI-anchored protein ARB_01627 (Arthroderma benhamiae (strain ATCC MYA-4681 / CBS 112371) (Trichophyton mentagrophytes)).